The following is a 187-amino-acid chain: Large ribosomal subunit protein eL18y (187 aa).

The disordered stretch occupies residues 151 to 187 (FGPAPGVPHSHSKPYVRAKGRKFEKARGKRKSRGFKV). 2 stretches are compositionally biased toward basic residues: residues 160–170 (SHSKPYVRAKG) and 177–187 (RGKRKSRGFKV).

It belongs to the eukaryotic ribosomal protein eL18 family. As to quaternary structure, interacts with NIK1. Interacts directly with EXA1. Ubiquitous.

The protein resides in the cytoplasm. This is Large ribosomal subunit protein eL18y (RPL18B) from Arabidopsis thaliana (Mouse-ear cress).